A 177-amino-acid chain; its full sequence is Large ribosomal subunit protein uL6 (177 aa).

The protein belongs to the universal ribosomal protein uL6 family. As to quaternary structure, part of the 50S ribosomal subunit.

Functionally, this protein binds to the 23S rRNA, and is important in its secondary structure. It is located near the subunit interface in the base of the L7/L12 stalk, and near the tRNA binding site of the peptidyltransferase center. In Delftia acidovorans (strain DSM 14801 / SPH-1), this protein is Large ribosomal subunit protein uL6.